Here is a 97-residue protein sequence, read N- to C-terminus: Protein ParC (97 aa).

This Escherichia coli protein is Protein ParC (parC).